A 217-amino-acid chain; its full sequence is Tegument protein BKRF4 (217 aa).

A disordered region spans residues 1-217; sequence MAMFLKSRGV…GNNNYNWPWL (217 aa). Positions 32–42 are enriched in polar residues; that stretch reads YTLGSQASQSI. A compositionally biased stretch (acidic residues) spans 43-79; the sequence is QEEDVSDTDESDYSDEDEEIDLEEEYPSDEDPSEGSD. An interaction with host histones H3/H4 region spans residues 63-64; that stretch reads DL. Positions 81–84 are interaction with host H2A/H2B; sequence DPSW. Acidic residues predominate over residues 89 to 102; it reads SDESDYSESDEDEA. Positions 106 to 132 are enriched in low complexity; sequence SQASRSSRVSPSTQQSSGLTPTPSFSR. Residues 136–145 show a composition bias toward pro residues; sequence RAPPRPPAPA. Positions 208–217 are enriched in polar residues; sequence GNNNYNWPWL.

This sequence belongs to the lymphocryptovirus BKRF4 family. Forms a complex with the host H3/H4 dimer and histone chaperone ASF1. Also forms a complex with host H2A/H2B dimer. Interacts (via C-terminus) with BGLF2; this interaction is important for infectious virion production.

It localises to the virion tegument. The protein localises to the host nucleus. The protein resides in the host cytoplasm. It is found in the host perinuclear region. In terms of biological role, histone-binding protein that binds to histones H2A/H2B, H3/H4 and cellular chromatin to overcome the host DNA damage response triggered by the viral genome ends. Interferes with histone ubiquitination and recruitment of repair proteins. This Epstein-Barr virus (strain GD1) (HHV-4) protein is Tegument protein BKRF4.